The chain runs to 856 residues: Leucine--tRNA ligase (856 aa).

A 'HIGH' region motif is present at residues 53–63 (PYPSGNLHMGH). Residues 622 to 626 (KMSKS) carry the 'KMSKS' region motif. K625 lines the ATP pocket.

This sequence belongs to the class-I aminoacyl-tRNA synthetase family.

Its subcellular location is the cytoplasm. The catalysed reaction is tRNA(Leu) + L-leucine + ATP = L-leucyl-tRNA(Leu) + AMP + diphosphate. This chain is Leucine--tRNA ligase, found in Prochlorococcus marinus (strain AS9601).